Here is a 221-residue protein sequence, read N- to C-terminus: MNNQIFESVDHYISDLLGYEDDALLAATNSLAEAGMPAISVSPNQGKFLQLLAQLCQAKNILELGTLAGYSTIWMARALPKNGRLITLEYDPKHAAVAQKNIDRAGLTSQVQIRTGKAIDILPQLVEEGAGPFDMIFIDADKPPYTEYFQWALRLSRPGTLIVADNVIRDGKVLDENSTEPAVQGARRFNAMLGANTAVDATILQMVGVKEYDGMALAIVK.

S-adenosyl-L-methionine contacts are provided by V41, G65, L67, S71, E89, H94, A118, and D139. The Mg(2+) site is built by D139, D165, and N166.

This sequence belongs to the class I-like SAM-binding methyltransferase superfamily. Cation-dependent O-methyltransferase family. In terms of assembly, homodimer. Requires Mg(2+) as cofactor.

It carries out the reaction a catechol + S-adenosyl-L-methionine = a guaiacol + S-adenosyl-L-homocysteine + H(+). Its activity is regulated as follows. The metal ion affects the meta and para-regiospecificity of the enzyme as well as the enzyme activity and thermal stability. Its function is as follows. Catechol O-methyltransferase that can use various catechol-like compounds. Can produce vanillic acid (meta-form) and iso-vanillic acid (para-form) from protocatechuic acid (PCA). Does not have a regiospecificity, and produces the meta- and para-forms of the products in equal proportion. This Niastella koreensis (strain DSM 17620 / KACC 11465 / NBRC 106392 / GR20-10) protein is Catechol O-methyltransferase.